A 317-amino-acid polypeptide reads, in one-letter code: 4-hydroxy-3-methylbut-2-enyl diphosphate reductase (317 aa).

C12 lines the [4Fe-4S] cluster pocket. Residues H41 and H74 each contribute to the (2E)-4-hydroxy-3-methylbut-2-enyl diphosphate site. Residues H41 and H74 each coordinate dimethylallyl diphosphate. The isopentenyl diphosphate site is built by H41 and H74. Residue C96 coordinates [4Fe-4S] cluster. Residue H124 coordinates (2E)-4-hydroxy-3-methylbut-2-enyl diphosphate. Residue H124 participates in dimethylallyl diphosphate binding. H124 lines the isopentenyl diphosphate pocket. The active-site Proton donor is E126. T168 contacts (2E)-4-hydroxy-3-methylbut-2-enyl diphosphate. C198 contacts [4Fe-4S] cluster. 4 residues coordinate (2E)-4-hydroxy-3-methylbut-2-enyl diphosphate: S226, S227, N228, and S270. S226, S227, N228, and S270 together coordinate dimethylallyl diphosphate. Isopentenyl diphosphate is bound by residues S226, S227, N228, and S270.

Belongs to the IspH family. Requires [4Fe-4S] cluster as cofactor.

The enzyme catalyses isopentenyl diphosphate + 2 oxidized [2Fe-2S]-[ferredoxin] + H2O = (2E)-4-hydroxy-3-methylbut-2-enyl diphosphate + 2 reduced [2Fe-2S]-[ferredoxin] + 2 H(+). It catalyses the reaction dimethylallyl diphosphate + 2 oxidized [2Fe-2S]-[ferredoxin] + H2O = (2E)-4-hydroxy-3-methylbut-2-enyl diphosphate + 2 reduced [2Fe-2S]-[ferredoxin] + 2 H(+). The protein operates within isoprenoid biosynthesis; dimethylallyl diphosphate biosynthesis; dimethylallyl diphosphate from (2E)-4-hydroxy-3-methylbutenyl diphosphate: step 1/1. Its pathway is isoprenoid biosynthesis; isopentenyl diphosphate biosynthesis via DXP pathway; isopentenyl diphosphate from 1-deoxy-D-xylulose 5-phosphate: step 6/6. Its function is as follows. Catalyzes the conversion of 1-hydroxy-2-methyl-2-(E)-butenyl 4-diphosphate (HMBPP) into a mixture of isopentenyl diphosphate (IPP) and dimethylallyl diphosphate (DMAPP). Acts in the terminal step of the DOXP/MEP pathway for isoprenoid precursor biosynthesis. The protein is 4-hydroxy-3-methylbut-2-enyl diphosphate reductase of Chromohalobacter salexigens (strain ATCC BAA-138 / DSM 3043 / CIP 106854 / NCIMB 13768 / 1H11).